Here is a 372-residue protein sequence, read N- to C-terminus: Aminomethyltransferase (372 aa).

This sequence belongs to the GcvT family. In terms of assembly, the glycine cleavage system is composed of four proteins: P, T, L and H.

The enzyme catalyses N(6)-[(R)-S(8)-aminomethyldihydrolipoyl]-L-lysyl-[protein] + (6S)-5,6,7,8-tetrahydrofolate = N(6)-[(R)-dihydrolipoyl]-L-lysyl-[protein] + (6R)-5,10-methylene-5,6,7,8-tetrahydrofolate + NH4(+). Its function is as follows. The glycine cleavage system catalyzes the degradation of glycine. The chain is Aminomethyltransferase from Burkholderia orbicola (strain MC0-3).